We begin with the raw amino-acid sequence, 434 residues long: MFS-type transporter pynF (434 aa).

Positions Met1 to Ser13 are enriched in basic and acidic residues. The segment at Met1–Leu34 is disordered. 12 helical membrane passes run Trp44 to Phe64, Ile84 to Pro104, Val109 to Thr129, Leu138 to Ile158, Ile171 to Ile191, Thr203 to Ile223, Leu249 to Leu269, Val280 to Gly302, Phe311 to Ile331, Ser334 to Leu354, Leu375 to Leu395, and Trp402 to Leu422.

The protein belongs to the major facilitator superfamily. Monocarboxylate porter (TC 2.A.1.13) family.

It is found in the cell membrane. Functionally, MFS-type transporter; part of the gene cluster that mediates the biosynthesis of pyranonigrins, a family of antioxidative compounds. May be involved in the secretion of pyranonigrins. This Aspergillus niger (strain ATCC MYA-4892 / CBS 513.88 / FGSC A1513) protein is MFS-type transporter pynF.